A 489-amino-acid polypeptide reads, in one-letter code: Valine--tRNA ligase (489 aa).

The 'KMSKS' region motif lies at 482–486; the sequence is KMSKS. K485 contacts ATP.

It belongs to the class-I aminoacyl-tRNA synthetase family.

It catalyses the reaction tRNA(Val) + L-valine + ATP = L-valyl-tRNA(Val) + AMP + diphosphate. The sequence is that of Valine--tRNA ligase (VALS) from Trichomonas vaginalis.